The chain runs to 276 residues: Glutamate racemase (276 aa).

Residues 12–13 (DS) and 44–45 (YG) contribute to the substrate site. C76 (proton donor/acceptor) is an active-site residue. 77-78 (NT) is a substrate binding site. C187 acts as the Proton donor/acceptor in catalysis. 188–189 (TH) contacts substrate.

Belongs to the aspartate/glutamate racemases family.

It carries out the reaction L-glutamate = D-glutamate. Its pathway is cell wall biogenesis; peptidoglycan biosynthesis. Functionally, provides the (R)-glutamate required for cell wall biosynthesis. The protein is Glutamate racemase of Granulibacter bethesdensis (strain ATCC BAA-1260 / CGDNIH1).